We begin with the raw amino-acid sequence, 406 residues long: Tryptophan 2,3-dioxygenase (406 aa).

Substrate is bound by residues 72 to 76 and R144; that span reads FIVTH. H328 contacts heme. T342 provides a ligand contact to substrate.

The protein belongs to the tryptophan 2,3-dioxygenase family. As to quaternary structure, homotetramer. Dimer of dimers. It depends on heme as a cofactor.

It catalyses the reaction L-tryptophan + O2 = N-formyl-L-kynurenine. Its pathway is amino-acid degradation; L-tryptophan degradation via kynurenine pathway; L-kynurenine from L-tryptophan: step 1/2. In terms of biological role, heme-dependent dioxygenase that catalyzes the oxidative cleavage of the L-tryptophan (L-Trp) pyrrole ring and converts L-tryptophan to N-formyl-L-kynurenine. Catalyzes the oxidative cleavage of the indole moiety. The sequence is that of Tryptophan 2,3-dioxygenase from Xenopus laevis (African clawed frog).